A 425-amino-acid polypeptide reads, in one-letter code: UDP-N-acetylglucosamine 1-carboxyvinyltransferase (425 aa).

22–23 (KN) is a phosphoenolpyruvate binding site. Arg-98 serves as a coordination point for UDP-N-acetyl-alpha-D-glucosamine. The active-site Proton donor is Cys-122. Cys-122 carries the 2-(S-cysteinyl)pyruvic acid O-phosphothioketal modification. UDP-N-acetyl-alpha-D-glucosamine-binding positions include 127–131 (RPVDQ), Asp-313, and Ile-335.

The protein belongs to the EPSP synthase family. MurA subfamily.

The protein localises to the cytoplasm. The enzyme catalyses phosphoenolpyruvate + UDP-N-acetyl-alpha-D-glucosamine = UDP-N-acetyl-3-O-(1-carboxyvinyl)-alpha-D-glucosamine + phosphate. The protein operates within cell wall biogenesis; peptidoglycan biosynthesis. Cell wall formation. Adds enolpyruvyl to UDP-N-acetylglucosamine. The sequence is that of UDP-N-acetylglucosamine 1-carboxyvinyltransferase from Xylella fastidiosa (strain 9a5c).